A 250-amino-acid chain; its full sequence is Cytochrome c oxidase subunit 2 (250 aa).

Residues 1–39 lie on the Mitochondrial intermembrane side of the membrane; sequence MFFLINKLVMNFDAPSPWGIYFQDSATPQMEGLNELHDN. The chain crosses the membrane as a helical span at residues 40–60; sequence IMYYLVVILFAVGWILLSIVI. Over 61–81 the chain is Mitochondrial matrix; it reads NYVSTKSPISHKYLNHGTLIE. A helical transmembrane segment spans residues 82–104; sequence LIWTITPAVILILIAFPSFKLLY. Over 105-250 the chain is Mitochondrial intermembrane; the sequence is LMDEVSDPSM…EKFLIWLKEQ (146 aa). Residues H185, C220, E222, C224, H228, and M231 each contribute to the Cu cation site. E222 lines the Mg(2+) pocket.

The protein belongs to the cytochrome c oxidase subunit 2 family. Component of the cytochrome c oxidase (complex IV, CIV), a multisubunit enzyme composed of a catalytic core of 3 subunits and several supernumerary subunits. The complex exists as a monomer or a dimer and forms supercomplexes (SCs) in the inner mitochondrial membrane with ubiquinol-cytochrome c oxidoreductase (cytochrome b-c1 complex, complex III, CIII). The cofactor is Cu cation.

It is found in the mitochondrion inner membrane. It catalyses the reaction 4 Fe(II)-[cytochrome c] + O2 + 8 H(+)(in) = 4 Fe(III)-[cytochrome c] + 2 H2O + 4 H(+)(out). Its function is as follows. Component of the cytochrome c oxidase, the last enzyme in the mitochondrial electron transport chain which drives oxidative phosphorylation. The respiratory chain contains 3 multisubunit complexes succinate dehydrogenase (complex II, CII), ubiquinol-cytochrome c oxidoreductase (cytochrome b-c1 complex, complex III, CIII) and cytochrome c oxidase (complex IV, CIV), that cooperate to transfer electrons derived from NADH and succinate to molecular oxygen, creating an electrochemical gradient over the inner membrane that drives transmembrane transport and the ATP synthase. Cytochrome c oxidase is the component of the respiratory chain that catalyzes the reduction of oxygen to water. Electrons originating from reduced cytochrome c in the intermembrane space (IMS) are transferred via the dinuclear copper A center (CU(A)) of subunit 2 and heme A of subunit 1 to the active site in subunit 1, a binuclear center (BNC) formed by heme A3 and copper B (CU(B)). The BNC reduces molecular oxygen to 2 water molecules using 4 electrons from cytochrome c in the IMS and 4 protons from the mitochondrial matrix. In Podospora anserina (strain S / ATCC MYA-4624 / DSM 980 / FGSC 10383) (Pleurage anserina), this protein is Cytochrome c oxidase subunit 2 (COII).